The following is a 157-amino-acid chain: SsrA-binding protein (157 aa).

The tract at residues 131 to 157 (KQLHDKRDTEKKRDWSREKGRIMRARG) is disordered. The span at 132–151 (QLHDKRDTEKKRDWSREKGR) shows a compositional bias: basic and acidic residues.

It belongs to the SmpB family.

It is found in the cytoplasm. Its function is as follows. Required for rescue of stalled ribosomes mediated by trans-translation. Binds to transfer-messenger RNA (tmRNA), required for stable association of tmRNA with ribosomes. tmRNA and SmpB together mimic tRNA shape, replacing the anticodon stem-loop with SmpB. tmRNA is encoded by the ssrA gene; the 2 termini fold to resemble tRNA(Ala) and it encodes a 'tag peptide', a short internal open reading frame. During trans-translation Ala-aminoacylated tmRNA acts like a tRNA, entering the A-site of stalled ribosomes, displacing the stalled mRNA. The ribosome then switches to translate the ORF on the tmRNA; the nascent peptide is terminated with the 'tag peptide' encoded by the tmRNA and targeted for degradation. The ribosome is freed to recommence translation, which seems to be the essential function of trans-translation. This is SsrA-binding protein from Rhodopseudomonas palustris (strain BisB18).